The following is a 441-amino-acid chain: Proline--tRNA ligase (441 aa).

Belongs to the class-II aminoacyl-tRNA synthetase family. ProS type 2 subfamily. As to quaternary structure, homodimer.

The protein resides in the cytoplasm. It carries out the reaction tRNA(Pro) + L-proline + ATP = L-prolyl-tRNA(Pro) + AMP + diphosphate. Catalyzes the attachment of proline to tRNA(Pro) in a two-step reaction: proline is first activated by ATP to form Pro-AMP and then transferred to the acceptor end of tRNA(Pro). The sequence is that of Proline--tRNA ligase from Bartonella quintana (strain Toulouse) (Rochalimaea quintana).